Here is a 295-residue protein sequence, read N- to C-terminus: MAIPMRPRLLAALAPTFLGFLLLQVAVGAGTPPGKAFNLTWISTDFKTILEWQPKPTNYTYTVQISDRSRNWKYKCTGTTDTECDLTDEIVKDVNWTYEARVLSVPWRNSTHGKETLFGTHGEEPPFTNARKFLPYRDTKIGQPVIQKYEQGGTKLKVTVKDSFTLVRKNGTFLTLRQVFGNDLGYILTYRKDSSTGRKTNTTHTNEFLIDVEKGVSYCFFAQAVIFSRKTNHKSPESITKCTEQWKSVLGETLIIVGAVVFLVTVFIILLTISLCKRRKNRAGQKRKNTPSRLA.

Positions 1-28 are cleaved as a signal peptide; that stretch reads MAIPMRPRLLAALAPTFLGFLLLQVAVG. Residues 29–252 are Extracellular-facing; it reads AGTPPGKAFN…TEQWKSVLGE (224 aa). N-linked (GlcNAc...) asparagine glycosylation is found at Asn-38 and Asn-58. Cysteines 76 and 84 form a disulfide. 4 N-linked (GlcNAc...) asparagine glycosylation sites follow: Asn-95, Asn-109, Asn-170, and Asn-201. Cys-219 and Cys-242 are joined by a disulfide. The short motif at 246-248 is the WKS motif element; that stretch reads WKS. Residues 253-275 form a helical membrane-spanning segment; the sequence is TLIIVGAVVFLVTVFIILLTISL. Cys-276 carries S-palmitoyl cysteine lipidation. Topologically, residues 276–295 are cytoplasmic; it reads CKRRKNRAGQKRKNTPSRLA.

This sequence belongs to the tissue factor family. As to quaternary structure, interacts with HSPE; the interaction, inhibited by heparin, promotes the generation of activated factor X and activates coagulation in the presence of activated factor VII.

It localises to the membrane. Functionally, initiates blood coagulation by forming a complex with circulating factor VII or VIIa. The [TF:VIIa] complex activates factors IX or X by specific limited proteolysis. TF plays a role in normal hemostasis by initiating the cell-surface assembly and propagation of the coagulation protease cascade. This chain is Tissue factor (F3), found in Rattus norvegicus (Rat).